We begin with the raw amino-acid sequence, 452 residues long: Protein EARLY-RESPONSIVE TO DEHYDRATION 7, chloroplastic (452 aa).

A compositionally biased stretch (polar residues) spans 1–18 (MESSGDKQTSSLYPTVDT). Residues 1-28 (MESSGDKQTSSLYPTVDTSNPEAPINPS) constitute a chloroplast transit peptide. Residues 1 to 37 (MESSGDKQTSSLYPTVDTSNPEAPINPSSSSSTNNLY) are disordered. Over residues 19-37 (SNPEAPINPSSSSSTNNLY) the composition is skewed to low complexity. In terms of domain architecture, Senescence spans 258–426 (IATGSGHLIK…AWVAFKIRKA (169 aa)).

The protein localises to the plastid. It localises to the chloroplast. The polypeptide is Protein EARLY-RESPONSIVE TO DEHYDRATION 7, chloroplastic (Arabidopsis thaliana (Mouse-ear cress)).